A 498-amino-acid chain; its full sequence is Glycerol kinase (498 aa).

An ADP-binding site is contributed by Thr-12. Residues Thr-12, Thr-13, and Ser-14 each contribute to the ATP site. Thr-12 is a sn-glycerol 3-phosphate binding site. Arg-16 is a binding site for ADP. Sn-glycerol 3-phosphate is bound by residues Arg-82, Glu-83, and Tyr-134. Glycerol is bound by residues Arg-82, Glu-83, and Tyr-134. The residue at position 230 (His-230) is a Phosphohistidine; by HPr. Asp-244 serves as a coordination point for sn-glycerol 3-phosphate. Residues Asp-244 and Gln-245 each contribute to the glycerol site. ADP contacts are provided by Thr-266 and Gly-309. ATP-binding residues include Thr-266, Gly-309, Gln-313, and Gly-410. ADP is bound by residues Gly-410 and Asn-414.

It belongs to the FGGY kinase family. In terms of assembly, homotetramer and homodimer (in equilibrium). In terms of processing, the phosphoenolpyruvate-dependent sugar phosphotransferase system (PTS), including enzyme I, and histidine-containing protein (HPr) are required for the phosphorylation, which leads to the activation of the enzyme.

The catalysed reaction is glycerol + ATP = sn-glycerol 3-phosphate + ADP + H(+). Its pathway is polyol metabolism; glycerol degradation via glycerol kinase pathway; sn-glycerol 3-phosphate from glycerol: step 1/1. Activated by phosphorylation and inhibited by fructose 1,6-bisphosphate (FBP). Key enzyme in the regulation of glycerol uptake and metabolism. Catalyzes the phosphorylation of glycerol to yield sn-glycerol 3-phosphate. The sequence is that of Glycerol kinase from Staphylococcus aureus (strain MRSA252).